The chain runs to 95 residues: Acylphosphatase (95 aa).

An Acylphosphatase-like domain is found at 9–95; the sequence is RLTAWVHGRV…KGGLTGFVER (87 aa). Active-site residues include R24 and N42.

Belongs to the acylphosphatase family.

It catalyses the reaction an acyl phosphate + H2O = a carboxylate + phosphate + H(+). In Saccharopolyspora erythraea (strain ATCC 11635 / DSM 40517 / JCM 4748 / NBRC 13426 / NCIMB 8594 / NRRL 2338), this protein is Acylphosphatase (acyP).